A 103-amino-acid chain; its full sequence is uncharacterized protein (103 aa).

It localises to the plastid. The protein localises to the chloroplast. This is an uncharacterized protein from Auxenochlorella pyrenoidosa (Freshwater green alga).